Consider the following 420-residue polypeptide: O-methyltransferase opaF (420 aa).

S-adenosyl-L-methionine contacts are provided by residues 262–263, D287, and 308–309; these read GG and DL. H328 acts as the Proton acceptor in catalysis.

Belongs to the class I-like SAM-binding methyltransferase superfamily. Cation-independent O-methyltransferase family.

It functions in the pathway secondary metabolite biosynthesis. In terms of biological role, O-methyltransferase; part of the gene cluster that mediates the biosynthesis of oxepinamides, derivatives of anthranilyl-containing tripeptides that share an oxepin ring and a fused pyrimidinone moiety. The nonribosomal peptide synthetase (NRPS) opaA assembles the quinazolinone core with D-Phe incorporation. The first adenylation domain (A1) of opaA loads and activates anthranilic acid whereas the second A domain (A2) is for activating of L-Phe, which is then converted to D-form by the E domain. The third A domain (A3) is responsible for L-Ile activation and the terminal condensation domain C3 for cyclization and releasing the NRPS product protuboxepin K. The cytochrome P450 monooxygenase opaB then catalyzes alone the oxepin ring formation to convert protuboxepin K into protuboxepin A. The flavoenzyme opaC installs subsequently one hydroxyl group at the oxepin ring, accompanied by double bond migration, to form 15-epi-oxepinamide E. The epimerase opaE changes the D-Phe residue back to L-form, leading to oxepinamide E, which is further methylated at the hydroxyl group at C-12 by the O-methyltransferase OpaF to yield oxepinamide F. The protein is O-methyltransferase opaF of Aspergillus ustus.